Consider the following 470-residue polypeptide: Uronate isomerase (470 aa).

The protein belongs to the metallo-dependent hydrolases superfamily. Uronate isomerase family.

It carries out the reaction D-glucuronate = D-fructuronate. The enzyme catalyses aldehydo-D-galacturonate = keto-D-tagaturonate. Its pathway is carbohydrate metabolism; pentose and glucuronate interconversion. In Vibrio parahaemolyticus serotype O3:K6 (strain RIMD 2210633), this protein is Uronate isomerase.